The chain runs to 614 residues: V-type proton ATPase catalytic subunit A isoform 2 (614 aa).

Residue serine 142 is modified to Phosphoserine. 247 to 254 contacts ATP; the sequence is GAFGCGKT.

The protein belongs to the ATPase alpha/beta chains family. As to quaternary structure, V-ATPase is a heteromultimeric enzyme made up of two complexes: the ATP-hydrolytic V1 complex and the proton translocation V0 complex. The V1 complex consists of three catalytic AB heterodimers that form a heterohexamer, three peripheral stalks each consisting of EG heterodimers, one central rotor including subunits D and F, and the regulatory subunits C and H. The proton translocation complex V0 consists of the proton transport subunit a, a ring of proteolipid subunits c9c'', rotary subunit d, subunits e and f, and the accessory subunits VhaAC45 and ATP6AP2.

It carries out the reaction ATP + H2O + 4 H(+)(in) = ADP + phosphate + 5 H(+)(out). Its activity is regulated as follows. ATP hydrolysis occurs at the interface between the nucleotide-binding domains of subunits A and B. ATP hydrolysis triggers a conformational change in the subunits D and F, which induces a shift of subunit d. The c-ring is subsequently rotated and results in a continuous proton translocation across the membrane. In terms of biological role, catalytic subunit of the V1 complex of vacuolar(H+)-ATPase (V-ATPase), a multisubunit enzyme composed of a peripheral complex (V1) that hydrolyzes ATP and a membrane integral complex (V0) that translocates protons. V-ATPase is responsible for acidifying and maintaining the pH of intracellular compartments and in some cell types, is targeted to the plasma membrane, where it is responsible for acidifying the extracellular environment. This Drosophila melanogaster (Fruit fly) protein is V-type proton ATPase catalytic subunit A isoform 2 (Vha68-2).